Consider the following 472-residue polypeptide: Ribosomal protein uS12 methylthiotransferase RimO (472 aa).

Residues 33 to 143 (NRIGFVSLGC…VLKHVHKYVP (111 aa)) enclose the MTTase N-terminal domain. [4Fe-4S] cluster is bound by residues cysteine 42, cysteine 78, cysteine 107, cysteine 175, cysteine 179, and cysteine 182. Residues 161–398 (LTPKHYAYLK…MELQAEISAE (238 aa)) enclose the Radical SAM core domain. Positions 401–467 (ARFVGRTLDI…EHDLWAEVVD (67 aa)) constitute a TRAM domain.

The protein belongs to the methylthiotransferase family. RimO subfamily. The cofactor is [4Fe-4S] cluster.

Its subcellular location is the cytoplasm. The enzyme catalyses L-aspartate(89)-[ribosomal protein uS12]-hydrogen + (sulfur carrier)-SH + AH2 + 2 S-adenosyl-L-methionine = 3-methylsulfanyl-L-aspartate(89)-[ribosomal protein uS12]-hydrogen + (sulfur carrier)-H + 5'-deoxyadenosine + L-methionine + A + S-adenosyl-L-homocysteine + 2 H(+). Catalyzes the methylthiolation of an aspartic acid residue of ribosomal protein uS12. The sequence is that of Ribosomal protein uS12 methylthiotransferase RimO from Shewanella putrefaciens (strain CN-32 / ATCC BAA-453).